The sequence spans 183 residues: MDIDPYKEFGASVELLSFLPSDFFPSIRDLLDTASALYREALESPEHCSPHHTALRQAILCWGELMNLATWVGSNLEDPASRELVVSYVNVNMGLKIRQLLWFHVSCLTFGRETVLEYLVSFGVWIRTPPAYRPPNAPILSTLPETTVVRRRGRSPRRRTPSPRRRRSQSPRRRRSQSRESQC.

Residues 136 to 183 (NAPILSTLPETTVVRRRGRSPRRRTPSPRRRRSQSPRRRRSQSRESQC) are disordered. A compositionally biased stretch (basic residues) spans 149–176 (VRRRGRSPRRRTPSPRRRRSQSPRRRRS). Residues Ser-155, Ser-162, and Ser-170 each carry the phosphoserine; by host modification. One copy of the 1; half-length repeat lies at 155-161 (SPRRRTP). Residues 155-177 (SPRRRTPSPRRRRSQSPRRRRSQ) form a 3 X 8 AA repeats of S-P-R-R-R-[PR]-S-Q region. Residues 158–175 (RRTPSPRRRRSQSPRRRR) carry the Bipartite nuclear localization signal motif. Tandem repeats lie at residues 162-169 (SPRRRRSQ) and 170-177 (SPRRRRSQ). The segment at 177–183 (QSRESQC) is RNA binding.

It belongs to the orthohepadnavirus core antigen family. Homodimerizes, then multimerizes. Interacts with cytosol exposed regions of viral L glycoprotein present in the reticulum-to-Golgi compartment. Interacts with human FLNB. Phosphorylated form interacts with host importin alpha; this interaction depends on the exposure of the NLS, which itself depends upon genome maturation and/or phosphorylation of the capsid protein. Interacts with host NUP153. Post-translationally, phosphorylated by host SRPK1, SRPK2, and maybe protein kinase C or GAPDH. Phosphorylation is critical for pregenomic RNA packaging. Protein kinase C phosphorylation is stimulated by HBx protein and may play a role in transport of the viral genome to the nucleus at the late step during the viral replication cycle.

The protein resides in the virion. The protein localises to the host cytoplasm. In terms of biological role, self assembles to form an icosahedral capsid. Most capsids appear to be large particles with an icosahedral symmetry of T=4 and consist of 240 copies of capsid protein, though a fraction forms smaller T=3 particles consisting of 180 capsid proteins. Entering capsids are transported along microtubules to the nucleus. Phosphorylation of the capsid is thought to induce exposure of nuclear localization signal in the C-terminal portion of the capsid protein that allows binding to the nuclear pore complex via the importin (karyopherin-) alpha and beta. Capsids are imported in intact form through the nuclear pore into the nuclear basket, where it probably binds NUP153. Only capsids that contain the mature viral genome can release the viral DNA and capsid protein into the nucleoplasm. Immature capsids get stuck in the basket. Capsids encapsulate the pre-genomic RNA and the P protein. Pre-genomic RNA is reverse-transcribed into DNA while the capsid is still in the cytoplasm. The capsid can then either be directed to the nucleus, providing more genomes for transcription, or bud through the endoplasmic reticulum to provide new virions. The chain is Capsid protein from Homo sapiens (Human).